Consider the following 497-residue polypeptide: Probable cytosol aminopeptidase (497 aa).

Residues Lys263 and Asp268 each contribute to the Mn(2+) site. The active site involves Lys275. Mn(2+)-binding residues include Asp286, Asp345, and Glu347. Arg349 is a catalytic residue.

It belongs to the peptidase M17 family. Mn(2+) serves as cofactor.

It localises to the cytoplasm. It catalyses the reaction Release of an N-terminal amino acid, Xaa-|-Yaa-, in which Xaa is preferably Leu, but may be other amino acids including Pro although not Arg or Lys, and Yaa may be Pro. Amino acid amides and methyl esters are also readily hydrolyzed, but rates on arylamides are exceedingly low.. It carries out the reaction Release of an N-terminal amino acid, preferentially leucine, but not glutamic or aspartic acids.. In terms of biological role, presumably involved in the processing and regular turnover of intracellular proteins. Catalyzes the removal of unsubstituted N-terminal amino acids from various peptides. The protein is Probable cytosol aminopeptidase of Sinorhizobium fredii (strain NBRC 101917 / NGR234).